The sequence spans 341 residues: MNTLVNILFILVPLLLSVAYLTYFERKVLAAIQLRHGPSVVGPFGLLQPFADAIKLLIKEPIIPFRASTILFIMAPMLTFILALIAWAVIPFGAEVIVENGQQVIIPKVIANINVGVLYVLAISSLGVYGVIIAGWSSNSNYAFLGAIRSAAQMISYEVSIGLIVAAVVITTGTLNLGEMVVAKHNMPFWVDLLLMPIGIIFFISLLAETNRHPFDLPEAEAELVSGYNVEYSSMPFALFFLGEYANMILASAMMTIFFLGGWYPPLEFSLLYKIPGLIWFVLKIVILLFIFIWIRATIPRYRYDQLMRLGWKVFLPISVLWVILISGVLLFTGNLPGSNV.

9 consecutive transmembrane segments (helical) span residues 4 to 24, 38 to 58, 70 to 90, 115 to 135, 161 to 181, 187 to 207, 239 to 259, 275 to 295, and 314 to 334; these read LVNI…LTYF, PSVV…KLLI, ILFI…WAVI, VGVL…IIAG, IGLI…GEMV, MPFW…ISLL, LFFL…TIFF, IPGL…FIWI, and VFLP…LFTG.

The protein belongs to the complex I subunit 1 family. As to quaternary structure, NDH-1 is composed of 14 different subunits. Subunits NuoA, H, J, K, L, M, N constitute the membrane sector of the complex.

The protein localises to the cell membrane. The catalysed reaction is a quinone + NADH + 5 H(+)(in) = a quinol + NAD(+) + 4 H(+)(out). In terms of biological role, NDH-1 shuttles electrons from NADH, via FMN and iron-sulfur (Fe-S) centers, to quinones in the respiratory chain. The immediate electron acceptor for the enzyme in this species is believed to be ubiquinone. Couples the redox reaction to proton translocation (for every two electrons transferred, four hydrogen ions are translocated across the cytoplasmic membrane), and thus conserves the redox energy in a proton gradient. This subunit may bind ubiquinone. This chain is NADH-quinone oxidoreductase subunit H, found in Wolbachia pipientis wMel.